The sequence spans 330 residues: Ribosomal RNA small subunit methyltransferase H (330 aa).

Residues glycine 48 to histidine 50, aspartate 67, leucine 101, aspartate 115, and glutamine 122 contribute to the S-adenosyl-L-methionine site.

It belongs to the methyltransferase superfamily. RsmH family.

The protein localises to the cytoplasm. It carries out the reaction cytidine(1402) in 16S rRNA + S-adenosyl-L-methionine = N(4)-methylcytidine(1402) in 16S rRNA + S-adenosyl-L-homocysteine + H(+). Specifically methylates the N4 position of cytidine in position 1402 (C1402) of 16S rRNA. In Pseudarthrobacter chlorophenolicus (strain ATCC 700700 / DSM 12829 / CIP 107037 / JCM 12360 / KCTC 9906 / NCIMB 13794 / A6) (Arthrobacter chlorophenolicus), this protein is Ribosomal RNA small subunit methyltransferase H.